We begin with the raw amino-acid sequence, 211 residues long: Holliday junction branch migration complex subunit RuvA (211 aa).

Positions 1-63 (MIASLRGTVI…EDSQTLYVFK (63 aa)) are domain I. The interval 64–142 (DADEKRAFAT…DLGEIADTGA (79 aa)) is domain II. Residues 143–157 (VGAAGAVGDGGDGQA) form a flexible linker region. Positions 158–211 (VAPDVREQVLEALVGLGFTESKAGTTIEAVLSQWSAPQAPDASGLLRASLAAIK) are domain III.

The protein belongs to the RuvA family. Homotetramer. Forms an RuvA(8)-RuvB(12)-Holliday junction (HJ) complex. HJ DNA is sandwiched between 2 RuvA tetramers; dsDNA enters through RuvA and exits via RuvB. An RuvB hexamer assembles on each DNA strand where it exits the tetramer. Each RuvB hexamer is contacted by two RuvA subunits (via domain III) on 2 adjacent RuvB subunits; this complex drives branch migration. In the full resolvosome a probable DNA-RuvA(4)-RuvB(12)-RuvC(2) complex forms which resolves the HJ.

The protein localises to the cytoplasm. Its function is as follows. The RuvA-RuvB-RuvC complex processes Holliday junction (HJ) DNA during genetic recombination and DNA repair, while the RuvA-RuvB complex plays an important role in the rescue of blocked DNA replication forks via replication fork reversal (RFR). RuvA specifically binds to HJ cruciform DNA, conferring on it an open structure. The RuvB hexamer acts as an ATP-dependent pump, pulling dsDNA into and through the RuvAB complex. HJ branch migration allows RuvC to scan DNA until it finds its consensus sequence, where it cleaves and resolves the cruciform DNA. The sequence is that of Holliday junction branch migration complex subunit RuvA from Corynebacterium jeikeium (strain K411).